We begin with the raw amino-acid sequence, 217 residues long: Ribonuclease HII (217 aa).

One can recognise an RNase H type-2 domain in the interval 27–216; sequence SQVAGVDEAG…VKESIQEGVC (190 aa). The a divalent metal cation site is built by D33, E34, and D126.

It belongs to the RNase HII family. It depends on Mn(2+) as a cofactor. Requires Mg(2+) as cofactor.

It localises to the cytoplasm. It catalyses the reaction Endonucleolytic cleavage to 5'-phosphomonoester.. In terms of biological role, endonuclease that specifically degrades the RNA of RNA-DNA hybrids. The protein is Ribonuclease HII (rnhB) of Chlamydia trachomatis serovar D (strain ATCC VR-885 / DSM 19411 / UW-3/Cx).